The primary structure comprises 101 residues: Urease subunit beta (101 aa).

This sequence belongs to the urease beta subunit family. Heterotrimer of UreA (gamma), UreB (beta) and UreC (alpha) subunits. Three heterotrimers associate to form the active enzyme.

It is found in the cytoplasm. The enzyme catalyses urea + 2 H2O + H(+) = hydrogencarbonate + 2 NH4(+). The protein operates within nitrogen metabolism; urea degradation; CO(2) and NH(3) from urea (urease route): step 1/1. This chain is Urease subunit beta, found in Actinobacillus pleuropneumoniae serotype 7 (strain AP76).